Reading from the N-terminus, the 274-residue chain is uncharacterized protein (274 aa).

Position 104–111 (104–111) interacts with ATP; it reads GVFAIGKS.

This is an uncharacterized protein from Mycoplasma genitalium (strain ATCC 33530 / DSM 19775 / NCTC 10195 / G37) (Mycoplasmoides genitalium).